We begin with the raw amino-acid sequence, 431 residues long: Putative malic acid transport protein (431 aa).

10 consecutive transmembrane segments (helical) span residues 30 to 50 (FTWA…VTSL), 62 to 82 (GKII…CITF), 101 to 121 (VLFM…LYPY), 136 to 156 (ILYW…FYSL), 167 to 187 (IIPA…IASA), 201 to 221 (VVAG…VYAV), 239 to 259 (GMFI…DLAF), 284 to 304 (FMAL…FVSV), 318 to 338 (VSWF…QELG), and 346 to 366 (VCIV…ILIL). Residues 402–424 (EEEKDEAERSKRKAEESDGKTTR) are compositionally biased toward basic and acidic residues. The interval 402 to 431 (EEEKDEAERSKRKAEESDGKTTRELTSGGL) is disordered.

It belongs to the tellurite-resistance/dicarboxylate transporter (TDT) family.

It is found in the membrane. This chain is Putative malic acid transport protein, found in Schizosaccharomyces pombe (strain 972 / ATCC 24843) (Fission yeast).